The primary structure comprises 527 residues: Catalase (527 aa).

A2 is subject to N-acetylalanine. The residue at position 9 (S9) is a Phosphoserine. K13 is modified (N6-succinyllysine). Catalysis depends on residues H75 and N148. NADP(+)-binding residues include H194, S201, R203, and N213. An N6-succinyllysine modification is found at K221. K233 carries the N6-acetyllysine modification. 4 residues coordinate NADP(+): K237, W303, H305, and K306. Position 306 is an N6-acetyllysine; alternate (K306). K306 carries the post-translational modification N6-succinyllysine; alternate. Position 358 (Y358) interacts with heme. S417 and S422 each carry phosphoserine. K480 is modified (N6-acetyllysine; alternate). K480 is modified (N6-succinyllysine; alternate). Position 499 is an N6-acetyllysine (K499). At T511 the chain carries Phosphothreonine. 2 positions are modified to phosphoserine: S515 and S517. Positions 524 to 527 (KANL) match the Microbody targeting signal; atypical motif.

Belongs to the catalase family. Homotetramer. Interacts (via microbody targeting signal) with PEX5, monomeric form interacts with PEX5, leading to its translocation into peroxisomes. Heme is required as a cofactor. NADP(+) serves as cofactor.

It is found in the peroxisome matrix. It carries out the reaction 2 H2O2 = O2 + 2 H2O. Catalyzes the degradation of hydrogen peroxide (H(2)O(2)) generated by peroxisomal oxidases to water and oxygen, thereby protecting cells from the toxic effects of hydrogen peroxide. Promotes growth of cells including T-cells, B-cells, myeloid leukemia cells, melanoma cells, mastocytoma cells and normal and transformed fibroblast cells. The sequence is that of Catalase (CAT) from Pongo abelii (Sumatran orangutan).